The chain runs to 354 residues: Uroporphyrinogen decarboxylase (354 aa).

Substrate contacts are provided by residues 30 to 34 (RQAGR), D79, Y154, S209, and H333.

It belongs to the uroporphyrinogen decarboxylase family. As to quaternary structure, homodimer.

It is found in the cytoplasm. The enzyme catalyses uroporphyrinogen III + 4 H(+) = coproporphyrinogen III + 4 CO2. It participates in porphyrin-containing compound metabolism; protoporphyrin-IX biosynthesis; coproporphyrinogen-III from 5-aminolevulinate: step 4/4. Functionally, catalyzes the decarboxylation of four acetate groups of uroporphyrinogen-III to yield coproporphyrinogen-III. In Mycobacterium sp. (strain JLS), this protein is Uroporphyrinogen decarboxylase.